A 466-amino-acid chain; its full sequence is DNA repair protein RadA (466 aa).

Residues 12-29 form a C4-type zinc finger; the sequence is CSECQHVAPKWVGRCANC. 100–107 serves as a coordination point for ATP; sequence GDPGVGKS. A RadA KNRFG motif motif is present at residues 261-265; sequence KNRFG. The lon-protease-like stretch occupies residues 359 to 466; it reads DLYLSTVGGM…MREIAIAGAQ (108 aa).

Belongs to the RecA family. RadA subfamily. As to quaternary structure, interacts with DisA.

Its function is as follows. DNA-dependent ATPase involved in processing of recombination intermediates, plays a role in repairing DNA breaks. Stimulates the branch migration of RecA-mediated strand transfer reactions, allowing the 3' invading strand to extend heteroduplex DNA faster. Binds ssDNA in the presence of ADP but not other nucleotides, has ATPase activity that is stimulated by ssDNA and various branched DNA structures, but inhibited by SSB. Does not have RecA's homology-searching function. Also inhibits the diadenylate cyclase activity of DisA. This is DNA repair protein RadA from Mycolicibacterium smegmatis (strain ATCC 700084 / mc(2)155) (Mycobacterium smegmatis).